Consider the following 219-residue polypeptide: MAEINRMQYEIDYTEGISQRMRVPEMLKVAPGNLGANLKAQQDMPIPGVVMEVPERIVVAGQSEESPFSRPSDLDFISGTNIGTLALKTPPRVLTLSERPLDFLDLEGLTPATPQSEEIRSSGHLKRDKFSSENALRQNGQLVRHDSMSAMSTLDTTLDATADDLALADAASLRRQIIKLNRRLLLLEEENKERVKHEMTMYSIIIIFGLLNSWLWLRR.

Topologically, residues 1–199 (MAEINRMQYE…ENKERVKHEM (199 aa)) are cytoplasmic. Positions 164–194 (DLALADAASLRRQIIKLNRRLLLLEEENKER) form a coiled coil. Residues 200–217 (TMYSIIIIFGLLNSWLWL) traverse the membrane as a helical; Anchor for type IV membrane protein segment. Over 218–219 (RR) the chain is Extracellular.

Belongs to the Tango11 family.

It localises to the mitochondrion outer membrane. It is found in the peroxisome. Its subcellular location is the cytoplasmic vesicle. The protein resides in the secretory vesicle. The protein localises to the synaptic vesicle. In terms of biological role, plays a role in mitochondrial and peroxisomal fission. Promotes the recruitment and association of the fission mediator dynamin-related protein 1 (DNM1L) to the mitochondrial surface. This chain is Mitochondrial fission factor homolog A (mff-a), found in Xenopus laevis (African clawed frog).